The following is a 98-amino-acid chain: Small ribosomal subunit protein bS20 (98 aa).

The protein belongs to the bacterial ribosomal protein bS20 family.

Binds directly to 16S ribosomal RNA. The chain is Small ribosomal subunit protein bS20 from Synechococcus sp. (strain CC9902).